The sequence spans 372 residues: Gustatory and pheromone receptor 39a, isoform B (372 aa).

Over 1 to 32 the chain is Cytoplasmic; the sequence is MGTRNRKLLFFLHYQRYLGLTNLDFSKSLHIY. A helical membrane pass occupies residues 33 to 53; sequence WLHGTWSSTAIQIVVVGVFMA. Topologically, residues 54–59 are extracellular; it reads ALLGAL. The helical transmembrane segment at 60-80 threads the bilayer; that stretch reads AESLYYMETKSQTGNTFDNAV. Residues 81 to 122 lie on the Cytoplasmic side of the membrane; it reads ILTTSVTQLLANLWLRSQQKSQVNLLQRLSQVVELLQFEPYA. Residues 123 to 143 form a helical membrane-spanning segment; it reads VPQFRWLYRIWLLVCLIYGAM. Topologically, residues 144–147 are extracellular; the sequence is VTHF. A helical transmembrane segment spans residues 148 to 168; sequence GINWLTTMQISRVLTLIGFVY. The Cytoplasmic segment spans residues 169–224; it reads RCVLANFQFTCYTGMVVILKKLLQVQVKQLEHLVSTTTISMAGVAGCLRTHDEILL. Residues 225–245 traverse the membrane as a helical segment; sequence LGQRELIAVYGGVILFLFIYQ. The Extracellular portion of the chain corresponds to 246 to 265; the sequence is VMQCILIFYISNLEGFHSSN. A helical membrane pass occupies residues 266–286; that stretch reads DLVLIFCWLAPMLFYLILPLV. The Cytoplasmic portion of the chain corresponds to 287–348; the sequence is VNDIHNQANK…KSTLFKLFTA (62 aa). A helical transmembrane segment spans residues 349-368; that stretch reads IFTYMVILVQFKEMENSTKS. Residue isoleucine 369 is a topological domain, extracellular.

This sequence belongs to the insect chemoreceptor superfamily. Gustatory receptor (GR) family. Gr21a subfamily. Expressed in the adult labellar chemosensory neurons. In larvae, is expressed in neurons of the terminal external chemosensory organ, as well as in the dorsal and posterior pharyngeal sense organs.

The protein localises to the cell membrane. Its function is as follows. Gustatory receptor which mediates acceptance or avoidance behavior, depending on its substrates. Plays a role in sustaining courtship behavior in males, possibly through the reception of a stimulating arrestant pheromone. This Drosophila melanogaster (Fruit fly) protein is Gustatory and pheromone receptor 39a, isoform B (Gr39a).